Consider the following 504-residue polypeptide: UDP-glycosyltransferase UGT4 (504 aa).

The signal sequence occupies residues 1 to 23 (MTLLRDLLLLYINSLLFINPSIG). Over 24-474 (ENILVFLPTK…SAVIDLYWFQ (451 aa)) the chain is Lumenal. 4 N-linked (GlcNAc...) asparagine glycosylation sites follow: Asn-54, Asn-66, Asn-69, and Asn-422. The chain crosses the membrane as a helical span at residues 475 to 495 (YILLDIILFYSLIVLILLCIL). At 496-504 (RIFFRMLTK) the chain is on the cytoplasmic side.

It belongs to the UDP-glycosyltransferase family.

Its subcellular location is the microsome membrane. Its function is as follows. Catalyzes the transfer of a glycosyl group from a UDP-sugar to an acceptor molecule. This is UDP-glycosyltransferase UGT4 from Dactylopius coccus (Cochineal).